The sequence spans 334 residues: Ferredoxin--NADP reductase (334 aa).

FAD is bound by residues Asp32, Gln40, Tyr45, Val85, Phe120, Asp287, and Thr327.

It belongs to the ferredoxin--NADP reductase type 2 family. In terms of assembly, homodimer. FAD is required as a cofactor.

It catalyses the reaction 2 reduced [2Fe-2S]-[ferredoxin] + NADP(+) + H(+) = 2 oxidized [2Fe-2S]-[ferredoxin] + NADPH. This is Ferredoxin--NADP reductase from Wolbachia pipientis subsp. Culex pipiens (strain wPip).